A 341-amino-acid polypeptide reads, in one-letter code: MQEELKELKEKALVDISEASSLDKLKDVQVKYLGKKGELTKILRGMGNLSPEERPVVGKLANEIRDDLEQAFEERENNLKEAEMQKRWEEEKIDVTLPGRVISRGAKHPLKKVLDEVHDIFLGMGYNIEEGPEIETDYYNFEALNIPKGHPAREMQDSLYITEEILLRTHTSPVQIRTMEQVAPEIPVRIICTGKVYRKDDDATHSPMFHQIEGLVVGERITLGDLKGTLLNFAKQMFGPEVDIRLRPSYFPFTEPSAEVDISCVICEGSGCRVCKGTGWLEILGSGMVHPKVFEMSGYDPDKVTGFAFGMGVERIAMLKYGIQDLRIFFENDKRMVNQFK.

Glu-255 is a binding site for Mg(2+).

Belongs to the class-II aminoacyl-tRNA synthetase family. Phe-tRNA synthetase alpha subunit type 1 subfamily. In terms of assembly, tetramer of two alpha and two beta subunits. Mg(2+) is required as a cofactor.

The protein resides in the cytoplasm. It catalyses the reaction tRNA(Phe) + L-phenylalanine + ATP = L-phenylalanyl-tRNA(Phe) + AMP + diphosphate + H(+). This is Phenylalanine--tRNA ligase alpha subunit from Natranaerobius thermophilus (strain ATCC BAA-1301 / DSM 18059 / JW/NM-WN-LF).